An 830-amino-acid polypeptide reads, in one-letter code: Dimethylglycine oxidase (830 aa).

FAD is bound by residues 14-15 (IV), 35-36 (DQ), 45-48 (STSH), L52, and V174. H48 carries the pros-8alpha-FAD histidine modification. Residues H225 and Y259 contribute to the active site. Residues Y259 and 360–363 (VWVT) contribute to the FAD site. Residue Y539 participates in (6S)-5,6,7,8-tetrahydrofolate binding. Catalysis depends on D552, which acts as the For 5,10-methylenetetrahydrofolate synthesis activity. Residues T554, G566, and 658-660 (ELY) contribute to the (6S)-5,6,7,8-tetrahydrofolate site.

Belongs to the GcvT family. Requires FAD as cofactor.

It carries out the reaction N,N-dimethylglycine + O2 + H2O = sarcosine + formaldehyde + H2O2. The catalysed reaction is N,N-dimethylglycine + (6S)-5,6,7,8-tetrahydrofolate + O2 = sarcosine + (6R)-5,10-methylene-5,6,7,8-tetrahydrofolate + H2O2. Catalyzes the oxidative demethylation of N,N-dimethylglycine to yield sarcosine, formaldehyde and hydrogen peroxide. The oxidation of dimethylglycine is coupled to the synthesis of 5,10-methylenetetrahydrofolate through an unusual substrate channeling mechanism. This channeling occurs by nonbiased diffusion of the iminium intermediate through a large solvent cavity connecting active site 1 (N-terminus) and active site 2 (C-terminus). The synthesis of 5,10-methylenetetrahydrofolate (at active site 2) prevents the accumulation of formaldehyde, formed by hydrolysis of the iminium intermediate product (at active site 1). Does not oxidize sarcosine. The polypeptide is Dimethylglycine oxidase (dmg) (Arthrobacter globiformis).